Here is a 316-residue protein sequence, read N- to C-terminus: Ribosomal RNA small subunit methyltransferase H (316 aa).

S-adenosyl-L-methionine-binding positions include 35–37, aspartate 55, phenylalanine 84, aspartate 105, and glutamine 112; that span reads AGH.

It belongs to the methyltransferase superfamily. RsmH family.

Its subcellular location is the cytoplasm. It catalyses the reaction cytidine(1402) in 16S rRNA + S-adenosyl-L-methionine = N(4)-methylcytidine(1402) in 16S rRNA + S-adenosyl-L-homocysteine + H(+). Specifically methylates the N4 position of cytidine in position 1402 (C1402) of 16S rRNA. The chain is Ribosomal RNA small subunit methyltransferase H from Streptococcus thermophilus (strain CNRZ 1066).